A 270-amino-acid polypeptide reads, in one-letter code: Interleukin-2 receptor subunit alpha (270 aa).

The N-terminal stretch at 1 to 21 is a signal peptide; sequence MEPSLLMWGFFTFTMIPGCMA. Positions 22 to 84 constitute a Sushi 1 domain; the sequence is GACVQQPPSL…FWENKCQCMP (63 aa). Residues 22 to 245 lie on the Extracellular side of the membrane; it reads GACVQQPPSL…QPIIFTTQYQ (224 aa). 3 disulfide bridges follow: C24-C67, C49-C80, and C51-C82. Residues N33 and N70 are each glycosylated (N-linked (GlcNAc...) asparagine). Positions 87–124 are disordered; sequence SPRIPVKQVTPRPEEQKERKTTETQGQMQPPNQANLPG. Positions 98–108 are enriched in basic and acidic residues; it reads RPEEQKERKTT. Polar residues predominate over residues 112 to 121; it reads GQMQPPNQAN. Residues 124-191 enclose the Sushi 2 domain; the sequence is GHCKEPPPWE…WTQPKLKCKS (68 aa). 2 cysteine pairs are disulfide-bonded: C126–C171 and C153–C189. N-linked (GlcNAc...) asparagine glycans are attached at residues N164 and N195. Positions 190 to 225 are disordered; the sequence is KSEKENGSFPEPQMSTAAPPTTKTSLPTRTKGTTDS. The segment covering 202–225 has biased composition (polar residues); that stretch reads QMSTAAPPTTKTSLPTRTKGTTDS. An N-linked (GlcNAc...) asparagine glycan is attached at N227. A helical transmembrane segment spans residues 246–264; it reads LAVAGCVLLLLSILLLSGL. The Cytoplasmic portion of the chain corresponds to 265 to 270; it reads TWQRRR.

As to quaternary structure, non-covalent dimer of an alpha and a beta subunit. IL2R exists in 3 different forms: a high affinity dimer, an intermediate affinity monomer (beta subunit), and a low affinity monomer (alpha subunit). The high and intermediate affinity forms also associate with a gamma subunit.

Its subcellular location is the membrane. Functionally, receptor for interleukin-2. The receptor is involved in the regulation of immune tolerance by controlling regulatory T cells (TREGs) activity. TREGs suppress the activation and expansion of autoreactive T-cells. The chain is Interleukin-2 receptor subunit alpha (IL2RA) from Sus scrofa (Pig).